We begin with the raw amino-acid sequence, 329 residues long: Ribose-phosphate pyrophosphokinase B (329 aa).

Mg(2+) is bound by residues aspartate 131, histidine 133, and glutamate 146. The interval 227 to 242 is binding of phosphoribosylpyrophosphate; sequence TGKIAIIIDDIADTCK.

The protein belongs to the ribose-phosphate pyrophosphokinase family. It depends on Mg(2+) as a cofactor.

It localises to the cytoplasm. It catalyses the reaction D-ribose 5-phosphate + ATP = 5-phospho-alpha-D-ribose 1-diphosphate + AMP + H(+). The protein operates within metabolic intermediate biosynthesis; 5-phospho-alpha-D-ribose 1-diphosphate biosynthesis; 5-phospho-alpha-D-ribose 1-diphosphate from D-ribose 5-phosphate (route I): step 1/1. In Dictyostelium discoideum (Social amoeba), this protein is Ribose-phosphate pyrophosphokinase B (prsB).